Reading from the N-terminus, the 528-residue chain is Inorganic phosphate transporter 1-2 (528 aa).

At 1–24 (MAGSQLNVLVKLDQAKTQWYHFMA) the chain is on the cytoplasmic side. A helical membrane pass occupies residues 25–45 (IVIAGMGFFTDAYDLFCIALV). Residues 46–71 (TKLLGRLYYTDITKPNPGTLPPNVSS) lie on the Extracellular side of the membrane. Residues 72 to 92 (AVTGVALCGTLAGQLFFGWLG) traverse the membrane as a helical segment. The Cytoplasmic portion of the chain corresponds to 93–99 (DKLGRKS). A helical transmembrane segment spans residues 100-120 (VYGFTLILMVVCSIASGLSFG). At 121–125 (HTPKS) the chain is on the extracellular side. Residues 126–146 (VIATLCFFRFWLGFGIGGDYP) form a helical membrane-spanning segment. The Cytoplasmic segment spans residues 147-163 (LSATIMSEYASKKTRGA). Residues 164–184 (FIAAVFAMQGFGILFGAIVAL) form a helical membrane-spanning segment. Residues 185–212 (VVSAGFRHAYPAPSYAQNPAASLAPQAD) lie on the Extracellular side of the membrane. The helical transmembrane segment at 213-232 (YTWRLILMFGTIPAGLTYYW) threads the bilayer. At 233 to 296 (RMKMPETARY…RQFMKRHGMH (64 aa)) the chain is on the cytoplasmic side. A helical membrane pass occupies residues 297-317 (LLATTSTWFLLDIAFYSQNLF). Residues 318-348 (QKDIFSKVGWIPPAKTMNALEELYRISRAQA) lie on the Extracellular side of the membrane. A helical transmembrane segment spans residues 349–369 (LIALCGTIPGYWFTVAFIDIV). Residues 370-371 (GR) are Cytoplasmic-facing. The helical transmembrane segment at 372–392 (FWIQIMGFFMMTVFMLALGVP) threads the bilayer. The Extracellular portion of the chain corresponds to 393 to 405 (YDHWTHPAHHTGF). Residues 406 to 426 (VVLYALTFFFANFGPNSTTFI) traverse the membrane as a helical segment. Residues 427–442 (VPAEIFPARLRSTCHG) are Cytoplasmic-facing. A helical transmembrane segment spans residues 443–463 (ISAASGKAGAIIGAFGFLYAA). Over 464–481 (QDQHNPDAGYSRGIGIRN) the chain is Extracellular. A helical transmembrane segment spans residues 482-502 (ALFVLAGTNFLGMLMTLLVPE). Residues 503 to 528 (SKGLSLEEMSKDNVVDETAQEAIAQA) are Cytoplasmic-facing.

This sequence belongs to the major facilitator superfamily. Phosphate:H(+) symporter (TC 2.A.1.9) family. In terms of tissue distribution, expressed in the root stele and leaf phloem and xylem.

It is found in the membrane. Its function is as follows. Low-affinity transporter for inorganic phosphate (Pi). Involved in internal Pi transport from root to shoot. Responsible for most of the PHR2-mediated accumulation of excess shoot Pi under abundant Pi conditions, but not for PHO2-mediated accumulation of excess shoot Pi. Acts as a H(+):phosphate symporter. In Oryza sativa subsp. japonica (Rice), this protein is Inorganic phosphate transporter 1-2 (PTH1-2).